A 104-amino-acid chain; its full sequence is UPF0145 protein RD1_2695 (104 aa).

The protein belongs to the UPF0145 family.

This is UPF0145 protein RD1_2695 from Roseobacter denitrificans (strain ATCC 33942 / OCh 114) (Erythrobacter sp. (strain OCh 114)).